The chain runs to 239 residues: Small ribosomal subunit protein uS2 (239 aa).

Belongs to the universal ribosomal protein uS2 family.

The polypeptide is Small ribosomal subunit protein uS2 (Lysinibacillus sphaericus (strain C3-41)).